The primary structure comprises 462 residues: Putative F-box protein At1g12855 (462 aa).

Residues 1 to 22 (MESREDSFISKEKKSTMKKEKQ) are compositionally biased toward basic and acidic residues. Residues 1-59 (MESREDSFISKEKKSTMKKEKQAIASQRNRRRVIKNRGNGKRLIASLSQRKRRRIPRGR) are disordered. Residues 28–40 (RNRRRVIKNRGNG) are compositionally biased toward basic residues. The F-box domain maps to 65–110 (VFAPSSLPNDVVEEIFLRLPVKAIIQLKSLSKQWRSTIESRSFEER).

The protein is Putative F-box protein At1g12855 of Arabidopsis thaliana (Mouse-ear cress).